Here is a 237-residue protein sequence, read N- to C-terminus: Large ribosomal subunit protein uL1 (237 aa).

This sequence belongs to the universal ribosomal protein uL1 family. In terms of assembly, part of the 50S ribosomal subunit.

Its function is as follows. Binds directly to 23S rRNA. The L1 stalk is quite mobile in the ribosome, and is involved in E site tRNA release. Protein L1 is also a translational repressor protein, it controls the translation of the L11 operon by binding to its mRNA. The sequence is that of Large ribosomal subunit protein uL1 from Dehalococcoides mccartyi (strain CBDB1).